Consider the following 436-residue polypeptide: Carboxypeptidase A5 (436 aa).

The first 33 residues, 1–33, serve as a signal peptide directing secretion; that stretch reads MQGTPGGGTRPGPSPVDRRTLLVFSFILAAALG. Positions 34–126 are cleaved as a propeptide — activation peptide; sequence QMNFTGDQVL…ERQAMAKSRR (93 aa). The Peptidase M14 domain maps to 138 to 431; the sequence is SYHTLEEIYS…MALRTIMEHT (294 aa). Positions 196 and 199 each coordinate Zn(2+). Substrate contacts are provided by residues 196–199, Arg-254, and 271–272; these read HSRE and NR. Cys-265 and Cys-288 are oxidised to a cystine. Residue His-323 participates in Zn(2+) binding. Substrate contacts are provided by residues 324 to 325 and Tyr-375; that span reads SY. The active-site Proton donor/acceptor is the Glu-397.

Belongs to the peptidase M14 family. It depends on Zn(2+) as a cofactor. As to expression, expression is very low or not detectable.

The protein resides in the secreted. The polypeptide is Carboxypeptidase A5 (CPA5) (Homo sapiens (Human)).